A 252-amino-acid polypeptide reads, in one-letter code: 2-succinyl-6-hydroxy-2,4-cyclohexadiene-1-carboxylate synthase (252 aa).

The protein belongs to the AB hydrolase superfamily. MenH family. As to quaternary structure, monomer.

The enzyme catalyses 5-enolpyruvoyl-6-hydroxy-2-succinyl-cyclohex-3-ene-1-carboxylate = (1R,6R)-6-hydroxy-2-succinyl-cyclohexa-2,4-diene-1-carboxylate + pyruvate. Its pathway is quinol/quinone metabolism; 1,4-dihydroxy-2-naphthoate biosynthesis; 1,4-dihydroxy-2-naphthoate from chorismate: step 3/7. The protein operates within quinol/quinone metabolism; menaquinone biosynthesis. Catalyzes a proton abstraction reaction that results in 2,5-elimination of pyruvate from 2-succinyl-5-enolpyruvyl-6-hydroxy-3-cyclohexene-1-carboxylate (SEPHCHC) and the formation of 2-succinyl-6-hydroxy-2,4-cyclohexadiene-1-carboxylate (SHCHC). In Salmonella heidelberg (strain SL476), this protein is 2-succinyl-6-hydroxy-2,4-cyclohexadiene-1-carboxylate synthase.